The primary structure comprises 1061 residues: MLRTAGRDGLCRLSTYLEELEAVELKKFKLYLGTATELGEGKIPWGSMEKAGPLEMAQLLITHFGPEEAWRLALSTFERINRKDLWERGQREDLVRDTPPGGPSSLGNQSTCLLEVSLVTPRKDPQETYRDYVRRKFRLMEDRNARLGECVNLSHRYTRLLLVKEHSNPMQVQQQLLDTGRGHARTVGHQASPIKIETLFEPDEERPEPPRTVVMQGAAGIGKSMLAHKVMLDWADGKLFQGRFDYLFYINCREMNQSATECSMQDLIFSCWPEPSAPLQELIRVPERLLFIIDGFDELKPSFHDPQGPWCLCWEEKRPTELLLNSLIRKKLLPELSLLITTRPTALEKLHRLLEHPRHVEILGFSEAERKEYFYKYFHNAEQAGQVFNYVRDNEPLFTMCFVPLVCWVVCTCLQQQLEGGGLLRQTSRTTTAVYMLYLLSLMQPKPGAPRLQPPPNQRGLCSLAADGLWNQKILFEEQDLRKHGLDGEDVSAFLNMNIFQKDINCERYYSFIHLSFQEFFAAMYYILDEGEGGAGPDQDVTRLLTEYAFSERSFLALTSRFLFGLLNEETRSHLEKSLCWKVSPHIKMDLLQWIQSKAQSDGSTLQQGSLEFFSCLYEIQEEEFIQQALSHFQVIVVSNIASKMEHMVSSFCLKRCRSAQVLHLYGATYSADGEDRARCSAGAHTLLVQLPERTVLLDAYSEHLAAALCTNPNLIELSLYRNALGSRGVKLLCQGLRHPNCKLQNLRLKRCRISSSACEDLSAALIANKNLTRMDLSGNGVGFPGMMLLCEGLRHPQCRLQMIQLRKCQLESGACQEMASVLGTNPHLVELDLTGNALEDLGLRLLCQGLRHPVCRLRTLWLKICRLTAAACDELASTLSVNQSLRELDLSLNELGDLGVLLLCEGLRHPTCKLQTLRLGICRLGSAACEGLSVVLQANHNLRELDLSFNDLGDWGLWLLAEGLQHPACRLQKLWLDSCGLTAKACENLYFTLGINQTLTDLYLTNNALGDTGVRLLCKRLSHPGCKLRVLWLFGMDLNKMTHSRLAALRVTKPYLDIGC.

Positions 1–95 constitute a Pyrin domain; that stretch reads MLRTAGRDGL…WERGQREDLV (95 aa). The FISNA domain occupies 129 to 201; sequence YRDYVRRKFR…SPIKIETLFE (73 aa). The NACHT domain maps to 211 to 528; it reads RTVVMQGAAG…EFFAAMYYIL (318 aa). 217–224 lines the ATP pocket; the sequence is GAAGIGKS. LRR repeat units lie at residues 828-848, 857-878, 885-906, 914-935, 942-962, 971-992, 999-1020, and 1028-1049; these read HLVE…RLLC, RLRT…ELAS, SLRE…LLCE, KLQT…GLSV, NLRE…WLLA, RLQK…NLYF, TLTD…LLCK, and KLRV…RLAA.

Belongs to the NLRP family. Interacts (via pyrin domain) with ASC. Interacts (via pyrin domain) with FAF1 (via UBA domain). Interacts with MAP3K14; this interaction promotes proteasomal degradation of MAP3K14. Interacts with NOD2; this interaction promotes degradation of NOD2 through the ubiquitin-proteasome pathway. Interacts with HSPA1A and HSPA8. Interacts with HSP90AA1. Interacts with TRIM25; this interaction inhibits RIGI-mediated signaling pathway. As to expression, detected only in peripheral blood leukocytes, predominantly in eosinophils and granulocytes, and at lower levels in monocytes.

Its subcellular location is the cytoplasm. Its function is as follows. Plays an essential role as an potent mitigator of inflammation. Primarily expressed in dendritic cells and macrophages, inhibits both canonical and non-canonical NF-kappa-B and ERK activation pathways. Functions as a negative regulator of NOD2 by targeting it to degradation via the proteasome pathway. In turn, promotes bacterial tolerance. Also inhibits the RIGI-mediated immune signaling against RNA viruses by reducing the E3 ubiquitin ligase TRIM25-mediated 'Lys-63'-linked RIGI activation but enhancing the E3 ubiquitin ligase RNF125-mediated 'Lys-48'-linked RIGI degradation. Also acts as a negative regulator of inflammatory response to mitigate obesity and obesity-associated diseases in adipose tissue. The polypeptide is NACHT, LRR and PYD domains-containing protein 12 (NLRP12) (Homo sapiens (Human)).